A 130-amino-acid chain; its full sequence is Glutamate-rich protein 4 (130 aa).

Residues 91–104 are compositionally biased toward acidic residues; it reads EEEEESSKEEEEDQ. A disordered region spans residues 91–130; that stretch reads EEEEESSKEEEEDQEPQRKQEEEHLEACPAPHPPDFEMMI. The segment covering 105 to 116 has biased composition (basic and acidic residues); the sequence is EPQRKQEEEHLE.

In Homo sapiens (Human), this protein is Glutamate-rich protein 4 (ERICH4).